The following is a 271-amino-acid chain: MLPYPQIDPVALAIGPLKIHWYGLMYLVGIGGAWLLASRRLNRFDPTWTKEKLSDLVFWLSMGVIVGGRLGYVLFYDLSAYIANPTLIFEVWKGGMSFHGGFIGVMLAALWFGKRNGKSFFQLMDFVAPMVPIGLGAGRIGNFINAELWGKATDVPWAMVFPPFSDPAQLPRHPSQLYQFALEGVALFLILWLFSRKPRPTMAVSGMFALFYGIFRFIVEFVRVPDAQLGYLAWNWLTMGQVLCVPMIIGGLFLIWLAYHRAPAAPVAPTA.

7 helical membrane-spanning segments follow: residues 10–30 (VALA…LVGI), 56–76 (LVFW…VLFY), 92–112 (WKGG…ALWF), 120–140 (FFQL…AGRI), 174–194 (PSQL…LWLF), 202–222 (MAVS…VEFV), and 237–257 (LTMG…LIWL). Residue R139 coordinates a 1,2-diacyl-sn-glycero-3-phospho-(1'-sn-glycerol).

The protein belongs to the Lgt family.

It is found in the cell inner membrane. It catalyses the reaction L-cysteinyl-[prolipoprotein] + a 1,2-diacyl-sn-glycero-3-phospho-(1'-sn-glycerol) = an S-1,2-diacyl-sn-glyceryl-L-cysteinyl-[prolipoprotein] + sn-glycerol 1-phosphate + H(+). It participates in protein modification; lipoprotein biosynthesis (diacylglyceryl transfer). In terms of biological role, catalyzes the transfer of the diacylglyceryl group from phosphatidylglycerol to the sulfhydryl group of the N-terminal cysteine of a prolipoprotein, the first step in the formation of mature lipoproteins. In Pseudomonas fluorescens (strain Pf0-1), this protein is Phosphatidylglycerol--prolipoprotein diacylglyceryl transferase.